The chain runs to 407 residues: Tryptophan synthase beta chain (407 aa).

An N6-(pyridoxal phosphate)lysine modification is found at Lys91.

It belongs to the TrpB family. Tetramer of two alpha and two beta chains. It depends on pyridoxal 5'-phosphate as a cofactor.

The catalysed reaction is (1S,2R)-1-C-(indol-3-yl)glycerol 3-phosphate + L-serine = D-glyceraldehyde 3-phosphate + L-tryptophan + H2O. It functions in the pathway amino-acid biosynthesis; L-tryptophan biosynthesis; L-tryptophan from chorismate: step 5/5. Its function is as follows. The beta subunit is responsible for the synthesis of L-tryptophan from indole and L-serine. The chain is Tryptophan synthase beta chain from Streptococcus pneumoniae (strain Hungary19A-6).